A 251-amino-acid chain; its full sequence is MTQTLSSQDPQAPAAPPMPGAAGSAPADVAHPKGIKSYVRRAGRTTTGQAKALEELGPRYVLDYAPALLDATAAFGRSAPLVLEIGFGMGEATAHIARVRPQDNFLCCEVHEPGVGALLKRIGEQDIHNIRILQHDAVEVLEHMLAPGALDGVHIFFPDPWHKKRHNKRRLIQPPLVAQLAARLKPGGYIHCATDWQPYAEQMLEVLSAEPLLSNTAEGYAPQPDYRPLTKFENRGMRLGHGVWDLVFTRR.

The segment at 1 to 29 (MTQTLSSQDPQAPAAPPMPGAAGSAPADV) is disordered. 4 residues coordinate S-adenosyl-L-methionine: Glu84, Glu109, Asp136, and Asp159. Residue Asp159 is part of the active site. Lys163 provides a ligand contact to substrate. The interval 165-170 (RHNKRR) is interaction with RNA. Residues Asp195 and 230 to 233 (TKFE) contribute to the substrate site.

Belongs to the class I-like SAM-binding methyltransferase superfamily. TrmB family.

The catalysed reaction is guanosine(46) in tRNA + S-adenosyl-L-methionine = N(7)-methylguanosine(46) in tRNA + S-adenosyl-L-homocysteine. It functions in the pathway tRNA modification; N(7)-methylguanine-tRNA biosynthesis. Catalyzes the formation of N(7)-methylguanine at position 46 (m7G46) in tRNA. The chain is tRNA (guanine-N(7)-)-methyltransferase from Acidovorax sp. (strain JS42).